A 143-amino-acid polypeptide reads, in one-letter code: Peptide methionine sulfoxide reductase MsrB (143 aa).

The region spanning 5-126 (KEEKIKSLNR…NSAALRFVPK (122 aa)) is the MsrB domain. Cys115 acts as the Nucleophile in catalysis.

The protein belongs to the MsrB Met sulfoxide reductase family.

It catalyses the reaction L-methionyl-[protein] + [thioredoxin]-disulfide + H2O = L-methionyl-(R)-S-oxide-[protein] + [thioredoxin]-dithiol. In Bacillus subtilis (strain 168), this protein is Peptide methionine sulfoxide reductase MsrB.